We begin with the raw amino-acid sequence, 1368 residues long: DNA-directed RNA polymerase subunit beta (1368 aa).

It belongs to the RNA polymerase beta chain family. In terms of assembly, the RNAP catalytic core consists of 2 alpha, 1 beta, 1 beta' and 1 omega subunit. When a sigma factor is associated with the core the holoenzyme is formed, which can initiate transcription.

It catalyses the reaction RNA(n) + a ribonucleoside 5'-triphosphate = RNA(n+1) + diphosphate. Its function is as follows. DNA-dependent RNA polymerase catalyzes the transcription of DNA into RNA using the four ribonucleoside triphosphates as substrates. The chain is DNA-directed RNA polymerase subunit beta from Ralstonia nicotianae (strain ATCC BAA-1114 / GMI1000) (Ralstonia solanacearum).